Here is a 230-residue protein sequence, read N- to C-terminus: Ribosomal RNA large subunit methyltransferase E (230 aa).

Residues glycine 76, tryptophan 78, aspartate 99, aspartate 115, and aspartate 139 each coordinate S-adenosyl-L-methionine. Lysine 179 (proton acceptor) is an active-site residue.

This sequence belongs to the class I-like SAM-binding methyltransferase superfamily. RNA methyltransferase RlmE family.

It localises to the cytoplasm. It catalyses the reaction uridine(2552) in 23S rRNA + S-adenosyl-L-methionine = 2'-O-methyluridine(2552) in 23S rRNA + S-adenosyl-L-homocysteine + H(+). Specifically methylates the uridine in position 2552 of 23S rRNA at the 2'-O position of the ribose in the fully assembled 50S ribosomal subunit. This chain is Ribosomal RNA large subunit methyltransferase E, found in Nitrobacter winogradskyi (strain ATCC 25391 / DSM 10237 / CIP 104748 / NCIMB 11846 / Nb-255).